The sequence spans 7913 residues: Nonribosomal peptide synthetase dtxS1 (7913 aa).

The segment at 263–662 is adenylation 1; sequence FEQRSRAHPN…GRNDNQVKIR (400 aa). Residues 789–865 enclose the Carrier 1 domain; it reads QPLSEVEKQV…NVAGQARRTT (77 aa). O-(pantetheine 4'-phosphoryl)serine is present on Ser-826. A condensation 1 region spans residues 903–1171; it reads QDAFPCTSLQ…ITTVPVRIRL (269 aa). Positions 1332-1740 are adenylation 2; it reads LETQAHSRPD…GRKDAQVKIR (409 aa). One can recognise a Carrier 2 domain in the interval 1865–1941; that stretch reads QPRTKLERQL…NLAQATGTQG (77 aa). Ser-1902 carries the O-(pantetheine 4'-phosphoryl)serine modification. Residues 1965–2249 form a condensation 2 region; that stretch reads PAQLSPIQRL…FSTIFPVRVS (285 aa). The segment at 2863-3255 is adenylation 3; that stretch reads LAQPHEPAIC…ARKDAQIKIR (393 aa). The region spanning 3380–3456 is the Carrier 3 domain; it reads QPLSEAERKM…NVTHQAVAQL (77 aa). At Ser-3417 the chain carries O-(pantetheine 4'-phosphoryl)serine. Positions 3496-3761 are condensation 3; sequence DAFPCTPLQE…FATLPLRVRL (266 aa). Residues 3924 to 4321 form an adenylation 4 region; sequence DRVRIHPNAP…GRKDDQVKLR (398 aa). Positions 4439-4450 are enriched in polar residues; that stretch reads ELAQARTAQQGP. Residues 4439–4459 form a disordered region; sequence ELAQARTAQQGPKRQPASEAE. In terms of domain architecture, Carrier 4 spans 4453 to 4529; sequence QPASEAERQM…EAATQAQMLG (77 aa). Residue Ser-4490 is modified to O-(pantetheine 4'-phosphoryl)serine. The condensation 4 stretch occupies residues 4545–4837; the sequence is QSFAQARLWF…VNMQCLRVKI (293 aa). Residues 5006–5405 form an adenylation 5 region; it reads FRQQVAACAD…RRMDAQVKIR (400 aa). One can recognise a Carrier 5 domain in the interval 5933–6009; sequence QPTSKTQRQL…DMAEGLPLAK (77 aa). Ser-5970 carries the O-(pantetheine 4'-phosphoryl)serine modification. The segment at 6023–6315 is condensation 5; that stretch reads VEQSFAQRRL…VNMQCIRIRV (293 aa). Residues 6481-6766 form an adenylation 6 region; sequence FRQQALLNPD…IINAYGPTEN (286 aa). The 77-residue stretch at 7394–7470 folds into the Carrier 6 domain; the sequence is QPTTDMEREM…DLACHLSPEE (77 aa). An O-(pantetheine 4'-phosphoryl)serine modification is found at Ser-7431. The segment at 7501 to 7771 is condensation 6; it reads EDVLPLTSFQ…CLNIVPIRVN (271 aa).

It belongs to the NRP synthetase family.

Its pathway is secondary metabolite biosynthesis. Nonribosomal peptide synthetase; part of the gene cluster that mediates the biosynthesis of destruxins, insecticidal cyclic hexadepsipeptides which induce flaccid paralysis and visceral muscle contraction in insects through targeting the calcium channels and vacuolar-type ATPases. The aldo-keto reductase dtxS3 converts alpha-ketoisocaproic acid from deaminated leucine into alpha-hydroxyisocaproic acid (HIC), which is the first substrate for destruxin assembly by dtxS1. L-aspartate decarboxylase dtxS4 converts aspartic acid into beta-alanine, the last substrate for the destruxin assembly line performed by dtxS1. The nonribosomal peptide synthetase dtxS1 synthesizes destruxins B and B2, whereas the cytochrome P450 monooxygenase dtxS2 is required to convert destruxin B into other destruxin derivatives, including destructins C, D, A and E. Destruxin E-diol (ED) is further produced in a non-enzymatic manner from destruxin E. Destruxins play an important role in virulence and escape from insect host immune defenses. In Metarhizium robertsii (strain ARSEF 23 / ATCC MYA-3075) (Metarhizium anisopliae (strain ARSEF 23)), this protein is Nonribosomal peptide synthetase dtxS1.